The primary structure comprises 1175 residues: Potassium/sodium hyperpolarization-activated cyclic nucleotide-gated channel 4 (1175 aa).

Over 1–259 the chain is Cytoplasmic; it reads MDKLPPSMRK…SAGFWIIHPY (259 aa). Residues 17-186 form a disordered region; the sequence is QQVGAKAWIM…SSCGEQRPAD (170 aa). Residues 26–36 are compositionally biased toward acidic residues; that stretch reads MDEEEDAEEEG. Residues 60-75 show a composition bias toward low complexity; it reads PSAAAAAAGGAESRGA. A compositionally biased stretch (gly residues) spans 111-126; the sequence is SRGGGGGGGSTGGGSH. A compositionally biased stretch (basic and acidic residues) spans 128-140; the sequence is HLHDSAEERRLIA. Ser-145 carries the post-translational modification Phosphoserine. The segment covering 162–175 has biased composition (pro residues); that stretch reads PGAPAPPAASPPQV. Residues 260-288 form a helical membrane-spanning segment; sequence SDFRFYWDLTMLLLMVGNLIIIPVGITFF. At 289-292 the chain is on the extracellular side; the sequence is KDEN. Residues 293 to 316 form a helical membrane-spanning segment; the sequence is TTPWIVFNVVSDTFFLIDLVLNFR. At 317-329 the chain is on the cytoplasmic side; it reads TGIVVEDNTDIIL. Residues 330 to 352 traverse the membrane as a helical segment; it reads DPRRIKMKYLKSWFVVDFVSSIP. Topologically, residues 353 to 374 are extracellular; sequence VDYIFLIVETRIDSEVYKTARA. A helical; Voltage-sensor transmembrane segment spans residues 375-410; it reads LRIVRFTKILSLLRLLRLSRLIRYIHQWEEIFHMTY. Residues 411–413 lie on the Cytoplasmic side of the membrane; sequence DLA. The chain crosses the membrane as a helical span at residues 414-444; the sequence is SAVVRIVNLIGMMLLLCHWDGCLQFLVPMLQ. At 445–449 the chain is on the extracellular side; sequence DFPDD. Positions 450 to 478 form an intramembrane region, pore-forming; sequence CWVSLNNMVNNSWGKQYSYALFKAMSHML. Residues 479-488 lie on the Extracellular side of the membrane; sequence CIGYGRQAPM. A helical transmembrane segment spans residues 489-521; it reads GMSDVWLTMLSMIVGATCYAMFIGHATALIQSL. Topologically, residues 522–1175 are cytoplasmic; it reads DSSRRQYQEK…PVRSKLPSNL (654 aa). Residues Tyr-560, Lys-563, Phe-565, and Glu-567 each coordinate 3',5'-cyclic GMP. The 3',5'-cyclic AMP site is built by Gly-660, Glu-661, Cys-663, Arg-670, Thr-671, Val-674, and Arg-711. Disordered regions lie at residues 801–820 and 830–1175; these read AIFR…AGQT and LAPS…PSNL. 4 stretches are compositionally biased toward low complexity: residues 839 to 854, 900 to 912, 948 to 966, and 984 to 1004; these read SPAS…SSAS, LGGS…SPLL, SPTS…LSPG, and RLPF…SPRG. Positions 1038-1050 are enriched in pro residues; the sequence is ASSPPPPPPPPAP. A phosphoserine mark is found at Ser-1089 and Ser-1093. A compositionally biased stretch (pro residues) spans 1102–1114; the sequence is PPFPRAPGRPPGA.

This sequence belongs to the potassium channel HCN family. In terms of assembly, homotetramer. The channel is composed of a homo- or heterotetrameric complex of pore-forming subunits. Interacts with PEX5L with a 4:4 HCN4:PEX5L stoichiometry; reduces the effects of cAMP on the voltage-dependence and rate of activation. Interacts with IRAG1; regulates HCN4 channel activity. Interacts with IRAG2; regulates HCN4 channel activity. In terms of processing, S-palmitoylated. Highly expressed in the heart sinoatrial node (SAN). Not detected in atrium, ventricle, forebrain or cerebellum. Detected at very low levels in total brain.

The protein localises to the cell membrane. The catalysed reaction is K(+)(in) = K(+)(out). The enzyme catalyses Na(+)(in) = Na(+)(out). With respect to regulation, activated by cAMP and to a lesser extent by cGMP and cCMP. cAMP binding causes a conformation change that leads to the assembly of an active tetramer and channel opening by shifting the voltage-dependency towards more positive voltages. Binding of cAMP removes a tonic inhibition conferred by cyclic nucleotide-binding domain (CNBD) on channel opening. Cyclic dinucleotides can modulate HCN4 channel; cyclic dinucleotides acting as potent antagonists of cAMP. Inhibited by extracellular Cs(+) ions. Auxiliary subunits can also regulate HCN4 channel. IRAG1 causes a gain-of-function by shifting HCN4 activation to more depolarized membrane potentials in the absence of cAMP. In contrast, IRAG2 causes a loss-of-function by inhibiting cAMP-dependent potentiation of HCN4 activation. In terms of biological role, hyperpolarization-activated ion channel that are permeable to Na(+) and K(+) ions with very slow activation and inactivation. Exhibits higher selectivity for K(+) over Na(+) ions. Contributes to the native pacemaker currents in heart (If) that regulate the rhythm of heart beat. Contributes to the native pacemaker currents in neurons (Ih). May mediate responses to sour stimuli. This Oryctolagus cuniculus (Rabbit) protein is Potassium/sodium hyperpolarization-activated cyclic nucleotide-gated channel 4 (HCN4).